Reading from the N-terminus, the 313-residue chain is Protease HtpX homolog (313 aa).

Transmembrane regions (helical) follow at residues 7–24 (AMLL…GYLI) and 29–46 (GMMI…FSYW). His130 is a binding site for Zn(2+). Residue Glu131 is part of the active site. Position 134 (His134) interacts with Zn(2+). The next 2 membrane-spanning stretches (helical) occupy residues 145 to 165 (ITAT…FFGG) and 172 to 192 (PFGF…AMVV). Glu201 provides a ligand contact to Zn(2+). Residues 282–313 (GNAPPASLREDEPGADGPWGRSASRARKGPWS) form a disordered region.

Belongs to the peptidase M48B family. Zn(2+) serves as cofactor.

Its subcellular location is the cell inner membrane. In Chelativorans sp. (strain BNC1), this protein is Protease HtpX homolog.